The sequence spans 181 residues: Inner membrane-spanning protein YciB (181 aa).

A run of 5 helical transmembrane segments spans residues I22–V42, M50–D70, I80–I100, I118–F138, and F148–V168.

Belongs to the YciB family.

It is found in the cell inner membrane. Plays a role in cell envelope biogenesis, maintenance of cell envelope integrity and membrane homeostasis. The polypeptide is Inner membrane-spanning protein YciB (Aliivibrio salmonicida (strain LFI1238) (Vibrio salmonicida (strain LFI1238))).